Here is a 552-residue protein sequence, read N- to C-terminus: MKSISKVEEVLEPISKIAEKIGLDEDEIELYGKYKAKISLDILKKKAQLQEGKVILVTSINPTPFGEGKTTTAIGLSMAINRLGFKSIVTLREPSLGPFLGLKGGATGGGASQILPSIDINLHFTGDIHAVTSANNLLCAAVDNHIYHGNRLGINPKSITIKRAMDMNDRSLRHIIVGLSNDQKGAIREDGFVISVASEVMAVLCLSMSYDDLKEKLGNILVGFTYDKKPVYAKDLNVHGSMALLLKDALKPNLVQTSENTAAIVHGGPFANIAHGTNSIVATKIAQKLSEYVVVEAGFGSDLGAEKFINIVARKSGIYPQAAVLVVTVKALKHHAKIEENSGLQSGVNSIQQGLENLEKHIENLKVMGLETVVALNKFPDDKDEEIELIRSFCEEMGVEFSVSSAYTHGSEGVLELAEKVIRLSDKRKRINFVYQDSDFIEEKIKKVATIIYGAKDVKFSKAALSKLELIKNLKVEHFPICMSKTQYSLSDDPKLLGKPKDFILNVTDIEIKNGAGFIVVMCGDIIAMPGLGKDFAALHLDIDSSGNPIFK.

63 to 70 provides a ligand contact to ATP; it reads TPFGEGKT.

Belongs to the formate--tetrahydrofolate ligase family.

It carries out the reaction (6S)-5,6,7,8-tetrahydrofolate + formate + ATP = (6R)-10-formyltetrahydrofolate + ADP + phosphate. The protein operates within one-carbon metabolism; tetrahydrofolate interconversion. This chain is Formate--tetrahydrofolate ligase, found in Caldicellulosiruptor bescii (strain ATCC BAA-1888 / DSM 6725 / KCTC 15123 / Z-1320) (Anaerocellum thermophilum).